Reading from the N-terminus, the 899-residue chain is Translation initiation factor IF-2 (899 aa).

Disordered stretches follow at residues 115–137 (EAKA…LQTE), 170–189 (RGGG…EQKK), and 262–309 (DREI…HGFE). The tr-type G domain maps to 399-568 (TRPPVVTIMG…LIQSELMELK (170 aa)). Positions 408–415 (GHVDHGKT) are G1. 408 to 415 (GHVDHGKT) is a binding site for GTP. Positions 433 to 437 (GITQH) are G2. A G3 region spans residues 454–457 (DTPG). Residues 454 to 458 (DTPGH) and 508 to 511 (NKMD) each bind GTP. Residues 508 to 511 (NKMD) are G4. The interval 544 to 546 (SAH) is G5.

The protein belongs to the TRAFAC class translation factor GTPase superfamily. Classic translation factor GTPase family. IF-2 subfamily.

Its subcellular location is the cytoplasm. In terms of biological role, one of the essential components for the initiation of protein synthesis. Protects formylmethionyl-tRNA from spontaneous hydrolysis and promotes its binding to the 30S ribosomal subunits. Also involved in the hydrolysis of GTP during the formation of the 70S ribosomal complex. The protein is Translation initiation factor IF-2 of Acinetobacter baumannii (strain SDF).